The chain runs to 365 residues: Peptide chain release factor 2 (365 aa).

At Q252 the chain carries N5-methylglutamine.

The protein belongs to the prokaryotic/mitochondrial release factor family. Post-translationally, methylated by PrmC. Methylation increases the termination efficiency of RF2.

It localises to the cytoplasm. Its function is as follows. Peptide chain release factor 2 directs the termination of translation in response to the peptide chain termination codons UGA and UAA. The polypeptide is Peptide chain release factor 2 (Yersinia pseudotuberculosis serotype O:1b (strain IP 31758)).